The sequence spans 69 residues: MKLQLCLVLLLLGVLYVQSVPEKRNKPECNSYRGQCTYMGHPCPDHTFPCETYFDCPAGPHERCCCYKD.

The signal sequence occupies residues 1 to 19; it reads MKLQLCLVLLLLGVLYVQS. A propeptide spanning residues 20–22 is cleaved from the precursor; that stretch reads VPE.

This sequence belongs to the Cnidaria small cysteine-rich protein (SCRiP) family. delta subfamily. In terms of processing, contains 4 disulfide bonds.

The protein resides in the secreted. It is found in the nematocyst. Its function is as follows. Induces neurotoxic symptoms on zebrafish. Has also been claimed to be implied in calcification, but this function seems improbable. The chain is Small cysteine-rich protein from Metridium senile (Brown sea anemone).